The following is a 154-amino-acid chain: Ribonuclease H (154 aa).

The region spanning 1–142 is the RNase H type-1 domain; the sequence is MTKQVEIFTD…CDELARQGAN (142 aa). Mg(2+) is bound by residues D10, E48, D70, and D134.

This sequence belongs to the RNase H family. In terms of assembly, monomer. Mg(2+) serves as cofactor.

The protein localises to the cytoplasm. It catalyses the reaction Endonucleolytic cleavage to 5'-phosphomonoester.. In terms of biological role, endonuclease that specifically degrades the RNA of RNA-DNA hybrids. The sequence is that of Ribonuclease H from Yersinia pestis bv. Antiqua (strain Antiqua).